A 349-amino-acid polypeptide reads, in one-letter code: Ferredoxin--NADP reductase (349 aa).

7 residues coordinate FAD: Asp-43, Gln-51, Tyr-56, Val-96, Phe-131, Asp-295, and Ser-336.

Belongs to the ferredoxin--NADP reductase type 2 family. In terms of assembly, homodimer. It depends on FAD as a cofactor.

The catalysed reaction is 2 reduced [2Fe-2S]-[ferredoxin] + NADP(+) + H(+) = 2 oxidized [2Fe-2S]-[ferredoxin] + NADPH. This Paraburkholderia phytofirmans (strain DSM 17436 / LMG 22146 / PsJN) (Burkholderia phytofirmans) protein is Ferredoxin--NADP reductase.